Here is a 422-residue protein sequence, read N- to C-terminus: 5-hydroxytryptamine receptor 1A (422 aa).

Residues 1 to 38 are Extracellular-facing; the sequence is MDVLGPGQGNNTTSSEGPFGTRANATGISDVTFSYQVI. N10, N11, and N24 each carry an N-linked (GlcNAc...) asparagine glycan. Residues 39–59 traverse the membrane as a helical segment; sequence TSLLLGTLIFCAVLGNACVVA. Residues 60–73 lie on the Cytoplasmic side of the membrane; that stretch reads AIALERSLQNVANY. Residues 74–98 form a helical membrane-spanning segment; sequence LIGSLAVTDLMVSVLVLPMAALYQV. Residues 99-107 are Extracellular-facing; sequence LNKWTLGQV. Residues 108–132 form a helical membrane-spanning segment; the sequence is TCDLFIALDVLCCTSSILHLCAIAL. A disulfide bridge connects residues C109 and C187. The serotonin site is built by D116 and C120. The DRY motif; important for ligand-induced conformation changes signature appears at 133 to 135; the sequence is DRY. Topologically, residues 133–152 are cytoplasmic; the sequence is DRYWAITDPIDYVNKRTPRR. A helical membrane pass occupies residues 153–174; it reads AAALISLTWLVGFLISIPPMLG. The Extracellular segment spans residues 175–193; sequence WRTPEDRSDPDACTISKDH. The helical transmembrane segment at 194 to 216 threads the bilayer; sequence GYTIYSTFGAFYIPLLLMLVLYG. Over 217–346 the chain is Cytoplasmic; sequence RIFRAARFRI…LARERKTVKT (130 aa). Positions 237-262 are disordered; that stretch reads GADSRLGASPAPQRKKSANGELGSRE. 1D-myo-inositol 4-phosphate contacts are provided by K345, T346, and G352. Residues 347-370 traverse the membrane as a helical segment; sequence LGIIMGTFILCWLPFFIVALVLPF. Residues 371–378 are Extracellular-facing; that stretch reads CESSCHMP. A helical membrane pass occupies residues 379-403; it reads TLLGAIINWLGYSNSLLNPVIYAYF. The NPxxY motif; important for ligand-induced conformation changes and signaling signature appears at 396–400; sequence NPVIY. Residues F403, N404, and K405 each coordinate 1D-myo-inositol 4-phosphate. The Cytoplasmic portion of the chain corresponds to 404–422; it reads NKDFQNAFKKILKCKFCRR.

Belongs to the G-protein coupled receptor 1 family. 5-hydroxytryptamine receptor subfamily. HTR1A sub-subfamily. Heterodimer; heterodimerizes with GPER1. Interacts with YIF1B. Interacts with GPR39 and GALR1.

The protein resides in the cell membrane. The protein localises to the cell projection. It localises to the dendrite. Its activity is regulated as follows. G-protein coupled receptor activity is regulated by lipids: phosphatidylinositol 4-phosphate increases HTR1A-mediated activity. Functionally, G-protein coupled receptor for 5-hydroxytryptamine (serotonin). Also functions as a receptor for various drugs and psychoactive substances. Ligand binding causes a conformation change that triggers signaling via guanine nucleotide-binding proteins (G proteins) and modulates the activity of downstream effectors, such as adenylate cyclase. HTR1A is coupled to G(i)/G(o) G alpha proteins and mediates inhibitory neurotransmission: signaling inhibits adenylate cyclase activity and activates a phosphatidylinositol-calcium second messenger system that regulates the release of Ca(2+) ions from intracellular stores. Beta-arrestin family members regulate signaling by mediating both receptor desensitization and resensitization processes. In Equus caballus (Horse), this protein is 5-hydroxytryptamine receptor 1A (HTR1A).